The following is a 328-amino-acid chain: Adenosine receptor A1 (328 aa).

Residues 1–10 (MPPSISAFQA) lie on the Extracellular side of the membrane. Residues 11-33 (AYIGIEVLIALVSVPGNVLVIWA) traverse the membrane as a helical segment. Residues 34–46 (VKVNQALRDATFC) lie on the Cytoplasmic side of the membrane. A helical membrane pass occupies residues 47–69 (FIVSLAVADVAVGALVIPLAILI). Topologically, residues 70-80 (NIGPETYFHTC) are extracellular. A disulfide bridge connects residues cysteine 80 and cysteine 169. The helical transmembrane segment at 81 to 102 (LMVACPVLILTQSSILALLAIA) threads the bilayer. Residues 103-123 (VDRYLRVKIPLRYKAVVTPRR) are Cytoplasmic-facing. A helical membrane pass occupies residues 124–146 (AAVAIAGCWILSLVVGLTPMFGW). The Extracellular segment spans residues 147-176 (NNLREVQRAWAANGSVGEPVIKCEFEKVIS). A glycan (N-linked (GlcNAc...) asparagine) is linked at asparagine 159. The chain crosses the membrane as a helical span at residues 177-201 (MEYMVYFNFFVWVLPPLLLMVLIYL). Residues 202–235 (EVFYLIRRQLSKKASASSGDPHKYYGKELKIAKS) lie on the Cytoplasmic side of the membrane. Residues 236–259 (LALILFLFALSWLPLHILNCVTLF) traverse the membrane as a helical segment. Over 260 to 267 (CPSCQKPS) the chain is Extracellular. Residues 268 to 292 (ILVYTAIFLTHGNSAMNPIVYAFRI) traverse the membrane as a helical segment. Topologically, residues 293-328 (HKFRVTFLKIWNDHFRCRPAPAGDGDEDLPEEKPND) are cytoplasmic. Cysteine 309 carries S-palmitoyl cysteine lipidation.

This sequence belongs to the G-protein coupled receptor 1 family.

The protein localises to the cell membrane. Its function is as follows. Receptor for adenosine. The activity of this receptor is mediated by G proteins which inhibit adenylyl cyclase. This is Adenosine receptor A1 (ADORA1) from Oryctolagus cuniculus (Rabbit).